The chain runs to 408 residues: Argininosuccinate synthase (408 aa).

Residues 14-22 and Ala-41 each bind ATP; that span reads AYSGGLDTS. The L-citrulline site is built by Tyr-92 and Ser-97. An ATP-binding site is contributed by Gly-122. Residues Thr-124, Asn-128, and Asp-129 each coordinate L-aspartate. Residue Asn-128 participates in L-citrulline binding. 5 residues coordinate L-citrulline: Arg-132, Ser-181, Ser-190, Glu-266, and Tyr-278.

Belongs to the argininosuccinate synthase family. Type 1 subfamily. Homotetramer.

It is found in the cytoplasm. It carries out the reaction L-citrulline + L-aspartate + ATP = 2-(N(omega)-L-arginino)succinate + AMP + diphosphate + H(+). It participates in amino-acid biosynthesis; L-arginine biosynthesis; L-arginine from L-ornithine and carbamoyl phosphate: step 2/3. The protein is Argininosuccinate synthase of Pelobacter propionicus (strain DSM 2379 / NBRC 103807 / OttBd1).